A 772-amino-acid chain; its full sequence is Acetamidase regulatory protein (772 aa).

Polar residues predominate over residues 1–16 (MSSTAQKNSLSPTGNG). The segment at 1–23 (MSSTAQKNSLSPTGNGVTKRKSG) is disordered. The segment at residues 26–59 (ACVHCHRRKVRCDARIVGLPCSNCRSSGKTDCRI) is a DNA-binding region (zn(2)-C6 fungal-type). 3 disordered regions span residues 78 to 99 (RCRP…TISE), 114 to 148 (AAAP…QECH), and 627 to 690 (ATSE…QTAV). Over residues 114-123 (AAAPPASVAP) the composition is skewed to low complexity. Polar residues-rich tracts occupy residues 124 to 144 (NVQS…SPQA) and 634 to 658 (PFSS…QHSS). Over residues 671 to 686 (LLPSYDSPTPDSTSLP) the composition is skewed to low complexity.

It is found in the nucleus. In terms of biological role, positively regulates the expression of genes involved in the catabolism of certain amides, omega amino acids, and lactams. The chain is Acetamidase regulatory protein (amdR) from Aspergillus fumigatus (strain ATCC MYA-4609 / CBS 101355 / FGSC A1100 / Af293) (Neosartorya fumigata).